The following is a 155-amino-acid chain: Probable tellurium resistance transcriptional regulator TerW (155 aa).

Involved in tellurite resistance. TerW binds specifically to the potential promoter region of the terZABCDE operon and probably regulates expression of the genes. The polypeptide is Probable tellurium resistance transcriptional regulator TerW (Escherichia coli).